Reading from the N-terminus, the 364-residue chain is Zinc finger protein CONSTANS-LIKE 12 (364 aa).

4 residues coordinate Zn(2+): C5, C8, C28, and H33. The B box-type 1; atypical zinc-finger motif lies at 5-47; that stretch reads CDHCATSQALIYCKSDLAKLCLNCDVHVHSANPLSHRHIRSLI. The B box-type 2; degenerate zinc-finger motif lies at 48–88; it reads CEKCFSQPAAIRCLDEKVSYCQGCHWHESNCSELGHRVQSL. Positions 280-322 constitute a CCT domain; the sequence is QDCGMSPGFIMSEAPWETNFEVSCPQARNEAKLRYKEKKLKRS.

It belongs to the CONSTANS family.

It localises to the nucleus. The chain is Zinc finger protein CONSTANS-LIKE 12 (COL12) from Arabidopsis thaliana (Mouse-ear cress).